Here is a 444-residue protein sequence, read N- to C-terminus: Squalene synthase ERG9 (444 aa).

Residues F421–L441 traverse the membrane as a helical segment.

The protein belongs to the phytoene/squalene synthase family. It depends on Mg(2+) as a cofactor.

Its subcellular location is the endoplasmic reticulum membrane. It is found in the microsome. The catalysed reaction is 2 (2E,6E)-farnesyl diphosphate + NADPH + H(+) = squalene + 2 diphosphate + NADP(+). It catalyses the reaction 2 (2E,6E)-farnesyl diphosphate + NADH + H(+) = squalene + 2 diphosphate + NAD(+). Its pathway is terpene metabolism; lanosterol biosynthesis; lanosterol from farnesyl diphosphate: step 1/3. In terms of biological role, squalene synthase; part of the third module of ergosterol biosynthesis pathway that includes the late steps of the pathway. ERG9 produces squalene from 2 farnesyl pyrophosphate moieties. The third module or late pathway involves the ergosterol synthesis itself through consecutive reactions that mainly occur in the endoplasmic reticulum (ER) membrane. Firstly, the squalene synthase ERG9 catalyzes the condensation of 2 farnesyl pyrophosphate moieties to form squalene, which is the precursor of all steroids. Squalene synthase is crucial for balancing the incorporation of farnesyl diphosphate (FPP) into sterol and nonsterol isoprene synthesis. Secondly, the squalene epoxidase ERG1 catalyzes the stereospecific oxidation of squalene to (S)-2,3-epoxysqualene, which is considered to be a rate-limiting enzyme in steroid biosynthesis. Then, the lanosterol synthase ERG7 catalyzes the cyclization of (S)-2,3 oxidosqualene to lanosterol, a reaction that forms the sterol core. In the next steps, lanosterol is transformed to zymosterol through a complex process involving various demethylation, reduction and desaturation reactions. The lanosterol 14-alpha-demethylase ERG11 (also known as CYP51) catalyzes C14-demethylation of lanosterol to produce 4,4'-dimethyl cholesta-8,14,24-triene-3-beta-ol, which is critical for ergosterol biosynthesis. The C-14 reductase ERG24 reduces the C14=C15 double bond of 4,4-dimethyl-cholesta-8,14,24-trienol to produce 4,4-dimethyl-cholesta-8,24-dienol. 4,4-dimethyl-cholesta-8,24-dienol is substrate of the C-4 demethylation complex ERG25-ERG26-ERG27 in which ERG25 catalyzes the three-step monooxygenation required for the demethylation of 4,4-dimethyl and 4alpha-methylsterols, ERG26 catalyzes the oxidative decarboxylation that results in a reduction of the 3-beta-hydroxy group at the C-3 carbon to an oxo group, and ERG27 is responsible for the reduction of the keto group on the C-3. ERG28 has a role as a scaffold to help anchor ERG25, ERG26 and ERG27 to the endoplasmic reticulum and ERG29 regulates the activity of the iron-containing C4-methylsterol oxidase ERG25. Then, the sterol 24-C-methyltransferase ERG6 catalyzes the methyl transfer from S-adenosyl-methionine to the C-24 of zymosterol to form fecosterol. The C-8 sterol isomerase ERG2 catalyzes the reaction which results in unsaturation at C-7 in the B ring of sterols and thus converts fecosterol to episterol. The sterol-C5-desaturase ERG3 then catalyzes the introduction of a C-5 double bond in the B ring to produce 5-dehydroepisterol. The C-22 sterol desaturase ERG5 further converts 5-dehydroepisterol into ergosta-5,7,22,24(28)-tetraen-3beta-ol by forming the C-22(23) double bond in the sterol side chain. Finally, ergosta-5,7,22,24(28)-tetraen-3beta-ol is substrate of the C-24(28) sterol reductase ERG4 to produce ergosterol. This chain is Squalene synthase ERG9, found in Saccharomyces cerevisiae (strain ATCC 204508 / S288c) (Baker's yeast).